Consider the following 70-residue polypeptide: DNA-directed RNA polymerase subunit epsilon (70 aa).

Belongs to the RNA polymerase subunit epsilon family. As to quaternary structure, RNAP is composed of a core of 2 alpha, a beta and a beta' subunit. The core is associated with a delta subunit, and at least one of epsilon or omega. When a sigma factor is associated with the core the holoenzyme is formed, which can initiate transcription.

The enzyme catalyses RNA(n) + a ribonucleoside 5'-triphosphate = RNA(n+1) + diphosphate. Functionally, a non-essential component of RNA polymerase (RNAP). The sequence is that of DNA-directed RNA polymerase subunit epsilon from Bacillus cereus (strain ATCC 14579 / DSM 31 / CCUG 7414 / JCM 2152 / NBRC 15305 / NCIMB 9373 / NCTC 2599 / NRRL B-3711).